We begin with the raw amino-acid sequence, 58 residues long: Protein SHMOOSE (58 aa).

Residues 27 to 58 (FGATPNKSNNHAHYYNHPNPDFPNSPHPYHPR) form a disordered region. Residues 35 to 45 (NNHAHYYNHPN) are compositionally biased toward low complexity. The segment covering 46–58 (PDFPNSPHPYHPR) has biased composition (pro residues).

Interacts with IMMT/mitofilin. Detected in cerebrospinal fluid (at protein level).

It localises to the mitochondrion. It is found in the nucleus. Its function is as follows. Increases neural cell metabolic activity and mitochondrial oxygen consumption rate. This Homo sapiens (Human) protein is Protein SHMOOSE.